Consider the following 596-residue polypeptide: MIDILGDWKRSHFCGSITAADTGKEVCLMGWVQRRRDHGGLIFIDLRDRQGIAQLALDPDRDPEAHAKAERVRNEYVVAVRGIVSARPEGTVNPKMATGEVEVEVKELRMLNGAETPPFLIEDNVDVAENIRLKHRYLDLRRPALQSNLVLRHKVAQIVRNYLNDTGFIEVETPVLTKSTPEGARDYLVPSRVNPGMFYALPQSPQLFKQLLMVSGFDRYYQIVKCFRDEDLRADRQPEFTQIDCELSFVDRQDIMDIMEAMIATVFQQILGIELSLPMPRITYTESMARFGVDNPDMRFDLELVEISNIAKDCGFKVFADAVKKGGIVKLLNAKQCASFSRKEIDDLTDFVKIYGAKGLAYVKIQEDGSWQSPIAKFFTEKEIALIDEAAGSEPGDLLLFAADTFKVANESLGRLRGHLGQKLGLARKDDFRFAWVTDFPLLEWDGEARRHVAVHHPFTAPLDEDIALLDGDPGSARAKAYDLVLNGSEIGGGSIRIHNREIQNKMFSLMGITAEEAEEKFGFLLGALSYGAPPHGGIAFGLDRLMMILTGSDSIRDVIAFPKTQKATCLLSEAPGAVDDKQLRELSIRRAVRNN.

Glutamate 182 contacts L-aspartate. The segment at 206-209 is aspartate; the sequence is QLFK. An L-aspartate-binding site is contributed by arginine 228. Residues 228 to 230 and glutamine 237 each bind ATP; that span reads RDE. An L-aspartate-binding site is contributed by histidine 456. Glutamate 490 provides a ligand contact to ATP. Arginine 497 contributes to the L-aspartate binding site. 542-545 contacts ATP; the sequence is GLDR.

The protein belongs to the class-II aminoacyl-tRNA synthetase family. Type 1 subfamily. As to quaternary structure, homodimer.

The protein resides in the cytoplasm. It catalyses the reaction tRNA(Asx) + L-aspartate + ATP = L-aspartyl-tRNA(Asx) + AMP + diphosphate. Aspartyl-tRNA synthetase with relaxed tRNA specificity since it is able to aspartylate not only its cognate tRNA(Asp) but also tRNA(Asn). Reaction proceeds in two steps: L-aspartate is first activated by ATP to form Asp-AMP and then transferred to the acceptor end of tRNA(Asp/Asn). The polypeptide is Aspartate--tRNA(Asp/Asn) ligase (Syntrophotalea carbinolica (strain DSM 2380 / NBRC 103641 / GraBd1) (Pelobacter carbinolicus)).